Here is a 241-residue protein sequence, read N- to C-terminus: MAPWTRDEEWFREARRRLVERLVREGYIRSEHVKRAMLRVPRELFVPDELRHLAYEDTPLPIGHGQTISAPHMVAMMTEYADLKPGMKVLEVGAGSGYHAAVMAEVVAPSDEPREHWGHVYTIERIPELAEFARRNLERAGYADRVTVIVGDGSRGYPEKAPYDRIIVTAAAPDIPGPLIDQLKPGGKMVIPIGDRYLQHLYVVVKTRDGKIESRPVTPCLFVPLVGEYGWREYEADTTLA.

Residue serine 69 is part of the active site.

It belongs to the methyltransferase superfamily. L-isoaspartyl/D-aspartyl protein methyltransferase family.

The protein resides in the cytoplasm. The enzyme catalyses [protein]-L-isoaspartate + S-adenosyl-L-methionine = [protein]-L-isoaspartate alpha-methyl ester + S-adenosyl-L-homocysteine. Its function is as follows. Catalyzes the methyl esterification of L-isoaspartyl residues in peptides and proteins that result from spontaneous decomposition of normal L-aspartyl and L-asparaginyl residues. It plays a role in the repair and/or degradation of damaged proteins. This chain is Protein-L-isoaspartate O-methyltransferase, found in Hyperthermus butylicus (strain DSM 5456 / JCM 9403 / PLM1-5).